We begin with the raw amino-acid sequence, 134 residues long: Galectin-1 (134 aa).

At Ala1 the chain carries N-acetylalanine. The Galectin domain occupies 4 to 134; sequence GVAVTNLNLK…GLAFKSITTE (131 aa). Residues 45-49, His53, Asn62, and 69-72 each bind a beta-D-galactoside; these read HFNAR and WGSE.

Homodimer.

Its subcellular location is the secreted. It localises to the extracellular space. The protein resides in the extracellular matrix. Its function is as follows. May regulate cell apoptosis and cell differentiation. Binds beta-galactoside and a wide array of complex carbohydrates. The polypeptide is Galectin-1 (Rhinella arenarum (Argentine common toad)).